The following is a 546-amino-acid chain: Chaperonin GroEL (546 aa).

ATP contacts are provided by residues T29 to P32, K50, D86 to T90, G414, N477 to L479, and D493.

The protein belongs to the chaperonin (HSP60) family. As to quaternary structure, forms a cylinder of 14 subunits composed of two heptameric rings stacked back-to-back. Interacts with the co-chaperonin GroES.

The protein resides in the cytoplasm. The catalysed reaction is ATP + H2O + a folded polypeptide = ADP + phosphate + an unfolded polypeptide.. Its function is as follows. Together with its co-chaperonin GroES, plays an essential role in assisting protein folding. The GroEL-GroES system forms a nano-cage that allows encapsulation of the non-native substrate proteins and provides a physical environment optimized to promote and accelerate protein folding. This chain is Chaperonin GroEL, found in Leptospira interrogans serogroup Icterohaemorrhagiae serovar Lai (strain 56601).